A 134-amino-acid polypeptide reads, in one-letter code: Phosphoribosyl-AMP cyclohydrolase (134 aa).

A Mg(2+)-binding site is contributed by Asp-80. Cys-81 lines the Zn(2+) pocket. Mg(2+) is bound by residues Asp-82 and Asp-84. Zn(2+) contacts are provided by Cys-98 and Cys-105.

Belongs to the PRA-CH family. In terms of assembly, homodimer. Mg(2+) serves as cofactor. It depends on Zn(2+) as a cofactor.

The protein localises to the cytoplasm. The enzyme catalyses 1-(5-phospho-beta-D-ribosyl)-5'-AMP + H2O = 1-(5-phospho-beta-D-ribosyl)-5-[(5-phospho-beta-D-ribosylamino)methylideneamino]imidazole-4-carboxamide. The protein operates within amino-acid biosynthesis; L-histidine biosynthesis; L-histidine from 5-phospho-alpha-D-ribose 1-diphosphate: step 3/9. Its function is as follows. Catalyzes the hydrolysis of the adenine ring of phosphoribosyl-AMP. The chain is Phosphoribosyl-AMP cyclohydrolase from Janthinobacterium sp. (strain Marseille) (Minibacterium massiliensis).